Consider the following 355-residue polypeptide: Putative inositol monophosphatase 3 (355 aa).

The chain crosses the membrane as a helical span at residues 16–36 (LPATIVAILLTFVLVYFLNFH). Residues E127, D167, L169, D170, and D292 each contribute to the Mg(2+) site. Substrate is bound at residue E127. Substrate is bound by residues 169-172 (LDAT) and D292.

Belongs to the inositol monophosphatase superfamily. It depends on Mg(2+) as a cofactor.

Its subcellular location is the membrane. The catalysed reaction is a myo-inositol phosphate + H2O = myo-inositol + phosphate. Its pathway is polyol metabolism; myo-inositol biosynthesis; myo-inositol from D-glucose 6-phosphate: step 2/2. This is Putative inositol monophosphatase 3 from Drosophila melanogaster (Fruit fly).